Consider the following 480-residue polypeptide: Sestrin-2 (480 aa).

Position 1 is an N-acetylmethionine (methionine 1). Residues 20–45 (PGGVGDSGPGEEQRESRARRGPRGPS) form a disordered region. Residues 66 to 239 (GLEALMSSGR…APTPPSEQSS (174 aa)) form an N-terminal domain; mediates the alkylhydroperoxide reductase activity region. Residue cysteine 125 is the Cysteine sulfenic acid (-SOH) intermediate of the active site. A Glycyl lysine isopeptide (Lys-Gly) (interchain with G-Cter in ubiquitin) cross-link involves residue lysine 175. The disordered stretch occupies residues 222–252 (ADGSPAPQAPTPPSEQSSPPSRDPLNNSGGF). A Phosphoserine modification is found at serine 249. A C-terminal domain; mediates TORC1 regulation region spans residues 308-480 (PHPDMLCFVE…ALRAITRYMT (173 aa)). L-leucine-binding positions include 374–377 (TYNT), threonine 386, and glutamate 451.

It belongs to the sestrin family. In terms of assembly, interacts with the GATOR2 complex which is composed of MIOS, SEC13, SEH1L, WDR24 and WDR59; the interaction is negatively regulated by leucine. Conveys leucine availability via direct interaction with SEH1L and WDR24 components of the GATOR2 complex. Interacts with RRAGA, RRAGB, RRAGC and RRAGD; may function as a guanine nucleotide dissociation inhibitor for RRAGs and regulate them. May interact with the TORC2 complex. Interacts with KEAP1, RBX1, SQSTM and ULK1; to regulate the degradation of KEAP1. May also associate with the complex composed of TSC1, TSC2 and the AMP-responsive protein kinase/AMPK to regulate TORC1 signaling. May interact with PRDX1. Phosphorylated by ULK1 at multiple sites. In terms of processing, ubiquitinated at Lys-175 by RNF167 via 'Lys-63'-linked polyubiquitination in response to leucine deprivation: ubiquitination promotes SESN2-interaction with the GATOR2 complex, leading to inhibit the TORC1 signaling pathway. Deubiquitinated at Lys-175 by STAMBPL1, promoting the TORC1 signaling pathway. Ubiquitinated by RNF186; ubiquitination mediates proteasomal degradation.

Its subcellular location is the cytoplasm. The enzyme catalyses a hydroperoxide + L-cysteinyl-[protein] = S-hydroxy-L-cysteinyl-[protein] + an alcohol. In terms of biological role, functions as an intracellular leucine sensor that negatively regulates the mTORC1 signaling pathway through the GATOR complex. In absence of leucine, binds the GATOR subcomplex GATOR2 and prevents mTORC1 signaling. Binding of leucine to SESN2 disrupts its interaction with GATOR2 thereby activating the TORC1 signaling pathway. This stress-inducible metabolic regulator also plays a role in protection against oxidative and genotoxic stresses. May negatively regulate protein translation in response to endoplasmic reticulum stress, via mTORC1. May positively regulate the transcription by NFE2L2 of genes involved in the response to oxidative stress by facilitating the SQSTM1-mediated autophagic degradation of KEAP1. May also mediate TP53 inhibition of TORC1 signaling upon genotoxic stress. Moreover, may prevent the accumulation of reactive oxygen species (ROS) through the alkylhydroperoxide reductase activity born by the N-terminal domain of the protein. Was originally reported to contribute to oxidative stress resistance by reducing PRDX1. However, this could not be confirmed. This Pongo abelii (Sumatran orangutan) protein is Sestrin-2.